We begin with the raw amino-acid sequence, 245 residues long: Small ribosomal subunit protein uS3 (245 aa).

One can recognise a KH type-2 domain in the interval Ile-39–Arg-107. A disordered region spans residues Asp-216–Ala-245. The segment covering Thr-221–Gly-235 has biased composition (polar residues).

It belongs to the universal ribosomal protein uS3 family. In terms of assembly, part of the 30S ribosomal subunit. Forms a tight complex with proteins S10 and S14.

Functionally, binds the lower part of the 30S subunit head. Binds mRNA in the 70S ribosome, positioning it for translation. The protein is Small ribosomal subunit protein uS3 of Hyphomonas neptunium (strain ATCC 15444).